Consider the following 533-residue polypeptide: Calcineurin-interacting protein 3 (533 aa).

3 disordered regions span residues 1–30, 53–85, and 359–404; these read MRSL…NMDI, PRKQ…YTKR, and MDMS…LTLP. Over residues 61–85 the composition is skewed to basic and acidic residues; the sequence is KRAEPVSEEHRKKESSKNSREYTKR. A compositionally biased stretch (polar residues) spans 359-372; sequence MDMSQTLSPEQTLS. The segment covering 373-384 has biased composition (basic and acidic residues); that stretch reads PREKLQVQDRKI.

It localises to the nucleus. The chain is Calcineurin-interacting protein 3 from Caenorhabditis elegans.